We begin with the raw amino-acid sequence, 413 residues long: DnaJ protein homolog (413 aa).

One can recognise a J domain in the interval 10 to 75; the sequence is NTKYYEILGV…REIYDQYGED (66 aa). A CR-type zinc finger spans residues 133–217; that stretch reads GTSKKLSLSR…CKGEKVVQEK (85 aa). CXXCXGXG motif repeat units follow at residues 146–153, 162–169, 189–196, and 205–212; these read CSKCKGKG, CPGCQGSG, CNECKGTG, and CSQCKGEK. Positions 387–413 are disordered; sequence RRKQAQEAYDEDEDMHGGAQRVQCAQQ. Cysteine methyl ester is present on Cys-410. A lipid anchor (S-farnesyl cysteine) is attached at Cys-410. A propeptide spans 411-413 (removed in mature form); sequence AQQ.

In terms of tissue distribution, expressed in seedlings in all tissues, but exceedingly high levels in hypocotyledons and roots.

The protein localises to the cell membrane. In terms of biological role, plays a continuous role in plant development probably in the structural organization of compartments. In Cucumis sativus (Cucumber), this protein is DnaJ protein homolog (DNAJ1).